We begin with the raw amino-acid sequence, 633 residues long: Membrane protein insertase YidC (633 aa).

A run of 6 helical transmembrane segments spans residues 3–23 (KNTL…SWFN), 377–397 (FIHN…IILF), 453–473 (LPML…PSAI), 499–519 (IPII…LMTI), 541–561 (GMKA…NQYA), and 562–582 (SGLT…TLIF). The segment at 612-633 (LEEAQRAQQETLRKQQEAKKKR) is disordered.

It belongs to the OXA1/ALB3/YidC family. Type 1 subfamily. As to quaternary structure, interacts with the Sec translocase complex via SecD. Specifically interacts with transmembrane segments of nascent integral membrane proteins during membrane integration.

It localises to the cell inner membrane. Functionally, required for the insertion and/or proper folding and/or complex formation of integral membrane proteins into the membrane. Involved in integration of membrane proteins that insert both dependently and independently of the Sec translocase complex, as well as at least some lipoproteins. Aids folding of multispanning membrane proteins. This is Membrane protein insertase YidC from Parabacteroides distasonis (strain ATCC 8503 / DSM 20701 / CIP 104284 / JCM 5825 / NCTC 11152).